Reading from the N-terminus, the 403-residue chain is MGKVWKQQMYPQYATYYYPQYLQAKQSLVPAHPMAPPSPSTTSSNNNSSSSSNSGWDQLSKTNLYIRGLPPNTTDQDLVKLCQPYGKIVSTKAILDKATNKCKGYGFVDFDSPAAAQKAVSALKASGVQAQMAKQQEQDPTNLYISNLPLSMDEQELENMLKPFGQVISTRVLRDSSGTSRGVGFARMESTEKCEAVIGHFNGKFIKTPPGVSAPTEPLLCKFADGGQKKRQNPNKYIPNGRPWPREGEAGMTLTYDPTTAALHNGFYPSPYSIATNRMITQTSLTPYIASPVSAYQVQSPSWMQPQPYILQHPGAVLTPSMEHTMSLQPASMISPLAQQMSHLSLGSTGTYMPATSAMQGAYLPQYTHMQTATVPVEEASGQQQVTVETSNDHSPYTFPPNK.

The tract at residues 30-56 (PAHPMAPPSPSTTSSNNNSSSSSNSGW) is disordered. Low complexity predominate over residues 40–54 (STTSSNNNSSSSSNS). RRM domains lie at 62-135 (TNLY…MAKQ) and 141-226 (TNLY…FADG). Thr208 is modified (phosphothreonine).

The protein resides in the nucleus. Its function is as follows. Single-stranded DNA binding protein that interacts with the region upstream of the MYC gene. Binds specifically to the DNA sequence motif 5'-[AT]CT[AT][AT]T-3'. Probably has a role in DNA replication. This is RNA-binding motif, single-stranded-interacting protein 1 from Rattus norvegicus (Rat).